We begin with the raw amino-acid sequence, 81 residues long: MKKLLIMLIRFYQRYISPLKPPTCRFTPTCSNYFIQALEKHGLLKGTFLGLRRILRCNPLSKGGYDPVPEEFSFKPRRRWS.

It belongs to the UPF0161 family.

Its subcellular location is the cell inner membrane. In terms of biological role, could be involved in insertion of integral membrane proteins into the membrane. The chain is Putative membrane protein insertion efficiency factor from Thermotoga maritima (strain ATCC 43589 / DSM 3109 / JCM 10099 / NBRC 100826 / MSB8).